A 182-amino-acid chain; its full sequence is uncharacterized protein (182 aa).

The N-terminal stretch at 1–29 (MKKLLKKLVVLFLSSLVIIFNVWYFIICA) is a signal peptide. A helical membrane pass occupies residues 152-174 (WNLYFWTAASYNAVIFVFVLVIV).

It is found in the membrane. This is an uncharacterized protein from Bacillus subtilis (strain 168).